The chain runs to 187 residues: MPAAPKQRKIAIVGSRSVGKSSLTVRFVEHHFVESYYPTIENTFSRIIKYNGQDFATEIVDTAGQDEYSILNSKHFIGIHGYIIVYSVASRQSFDMVRVIRDKILNHLGADHVPLVVVGNKSDLKSEQRQVSLDEGRQLGEEFQCAFTEASARLDYNVTKAFDLMIGEIEKSQNPSQPAGGSKCILM.

Residues Ser17, Val18, Gly19, Lys20, Ser21, Ser22, Val33, and Glu34 each coordinate GDP. A GTP-binding site is contributed by Ser17. The GTP site is built by Gly19, Lys20, Ser21, Ser22, and Val33. A Mg(2+)-binding site is contributed by Ser21. The GTP site is built by Tyr36, Thr39, Asn120, Asp123, and Ala152. Residues 36-44 (YYPTIENTF) carry the Effector region motif. Thr39 contacts Mg(2+). Residues Asn120, Asp123, and Ala152 each contribute to the GDP site. Cys184 is lipidated: S-farnesyl cysteine.

This sequence belongs to the small GTPase superfamily. Rheb family. Farnesylation is important for efficiently activating mTORC1-mediated signaling.

It localises to the cell membrane. The catalysed reaction is GTP + H2O = GDP + phosphate + H(+). Alternates between an inactive form bound to GDP and an active form bound to GTP. Functionally, small GTPase that acts as an allosteric activator of the canonical TOR pathway, an evolutionarily conserved central nutrient sensor that stimulates anabolic reactions and macromolecule biosynthesis to promote cellular biomass generation and growth. Plays a role in virulence. In Aspergillus fumigatus (strain ATCC MYA-4609 / CBS 101355 / FGSC A1100 / Af293) (Neosartorya fumigata), this protein is Small monomeric GTPase RhbA.